A 37-amino-acid chain; its full sequence is Photosystem I reaction center subunit VIII (37 aa).

Residues 10–30 (IFVPLVGLVFPAIAMASLSLY) traverse the membrane as a helical segment.

Belongs to the PsaI family.

It localises to the plastid. It is found in the chloroplast thylakoid membrane. Its function is as follows. May help in the organization of the PsaL subunit. This chain is Photosystem I reaction center subunit VIII, found in Gossypium hirsutum (Upland cotton).